A 151-amino-acid polypeptide reads, in one-letter code: Large ribosomal subunit protein bL9 (151 aa).

The protein belongs to the bacterial ribosomal protein bL9 family.

In terms of biological role, binds to the 23S rRNA. This is Large ribosomal subunit protein bL9 from Chlorobium chlorochromatii (strain CaD3).